We begin with the raw amino-acid sequence, 216 residues long: Endoplasmic reticulum vesicle protein 25 (216 aa).

The signal sequence occupies residues 1–25 (MGSSRLAMRSALGLFFLLFVQISLA). Over 26–185 (LKFDIAAGKG…TNESTNERVK (160 aa)) the chain is Lumenal. A GOLD domain is found at 36–126 (ERCIRNFVLK…HRSIELDVDI (91 aa)). A helical membrane pass occupies residues 186-206 (WFAFGTMGMLVGLGVWQVIYL). Residues 207 to 216 (RAYFRSKHLI) lie on the Cytoplasmic side of the membrane.

This sequence belongs to the EMP24/GP25L family.

Its subcellular location is the endoplasmic reticulum membrane. The protein resides in the golgi apparatus membrane. Functionally, constituent of COPII-coated endoplasmic reticulum-derived transport vesicles. Required for efficient transport of a subset of secretory proteins to the Golgi. Facilitates retrograde transport from the Golgi to the endoplasmic reticulum. The sequence is that of Endoplasmic reticulum vesicle protein 25 (erv25) from Emericella nidulans (strain FGSC A4 / ATCC 38163 / CBS 112.46 / NRRL 194 / M139) (Aspergillus nidulans).